A 644-amino-acid chain; its full sequence is MTLRRFSYTFQARILRGLQARPVFVLPSRSHSTKARPVVDIADAAEHIPTVNIRNWAIISHIDHGKSTLSDRILELTGVIEKSSGKQRVLDKLSVEQRRGITVKAQTCSMIYEYNDEQYLLNLIDTPGHVDFSSEVTHSLAACEGCILLVDATRGIQAQTVSNFYLAFARNLVIIPVLNKIDLPTAEPEKVLAQLEEVFELDRKEALLVSSKTGKNVPELIDAIIQRVPHPICDENASLKCVLIDSWFNTHRGVIGLVRILDGKLVAGAAIYSVNTHRKYVVNEVGFMHPNPVEAQVLLAGQVGYVNWNMKNSAEAILGDTFTQVGHVVKAMPGFEKQQPKVYVNAFPLVRSDYDSLSDSIDRLALNDRSIFVEKDTSDTLGIGWRLGFLGSLHLSVFLDRLKDEYKHEVLVTAPTVPYRITWKDGMTSMVSNPSNFPDARTAYAQVEEPMALVTLVFPREYVGPVMNLCESCRGTQQKCSFLSTARCVLEYLLPMSRLMDGFFDQLKSCTHGYGSLEYEDAGFAPSDIVKLSYLVNGMPIDALCTILHRSSVLRTARASLQRLKSLIPRQLYEVALQAMCEKHIIARETISAARKNVTAKCYGGDVTRKMKLLKNQREGKKRMKQFGNVSIDQGVFYDFLMKS.

The N-terminal 31 residues, 1-31 (MTLRRFSYTFQARILRGLQARPVFVLPSRSH), are a transit peptide targeting the mitochondrion. The 182-residue stretch at 51-232 (VNIRNWAIIS…AIIQRVPHPI (182 aa)) folds into the tr-type G domain. Residues 60–67 (SHIDHGKS), 125–129 (DTPGH), and 179–182 (NKID) contribute to the GTP site.

This sequence belongs to the TRAFAC class translation factor GTPase superfamily. Classic translation factor GTPase family. LepA subfamily.

It localises to the mitochondrion inner membrane. The catalysed reaction is GTP + H2O = GDP + phosphate + H(+). In terms of biological role, promotes mitochondrial protein synthesis. May act as a fidelity factor of the translation reaction, by catalyzing a one-codon backward translocation of tRNAs on improperly translocated ribosomes. Binds to mitochondrial ribosomes in a GTP-dependent manner. The protein is Translation factor guf1, mitochondrial (guf1) of Schizosaccharomyces japonicus (strain yFS275 / FY16936) (Fission yeast).